Consider the following 146-residue polypeptide: Putative phosphotransferase enzyme IIA component YadI (146 aa).

The 124-residue stretch at 1–124 (MLGWVITCHD…RIVELGAPEV (124 aa)) folds into the PTS EIIA type-4 domain. Histidine 9 functions as the Tele-phosphohistidine intermediate in the catalytic mechanism.

It is found in the cytoplasm. Functionally, the phosphoenolpyruvate-dependent sugar phosphotransferase system (sugar PTS), a major carbohydrate active -transport system, catalyzes the phosphorylation of incoming sugar substrates concomitantly with their translocation across the cell membrane. This Escherichia coli (strain K12) protein is Putative phosphotransferase enzyme IIA component YadI (yadI).